A 372-amino-acid polypeptide reads, in one-letter code: UDP-N-acetylglucosamine--N-acetylmuramyl-(pentapeptide) pyrophosphoryl-undecaprenol N-acetylglucosamine transferase (372 aa).

UDP-N-acetyl-alpha-D-glucosamine-binding positions include 16-18 (TGG), Asn-128, Arg-164, Ser-192, Ile-250, and Gln-295.

This sequence belongs to the glycosyltransferase 28 family. MurG subfamily.

Its subcellular location is the cell inner membrane. The enzyme catalyses di-trans,octa-cis-undecaprenyl diphospho-N-acetyl-alpha-D-muramoyl-L-alanyl-D-glutamyl-meso-2,6-diaminopimeloyl-D-alanyl-D-alanine + UDP-N-acetyl-alpha-D-glucosamine = di-trans,octa-cis-undecaprenyl diphospho-[N-acetyl-alpha-D-glucosaminyl-(1-&gt;4)]-N-acetyl-alpha-D-muramoyl-L-alanyl-D-glutamyl-meso-2,6-diaminopimeloyl-D-alanyl-D-alanine + UDP + H(+). The protein operates within cell wall biogenesis; peptidoglycan biosynthesis. Cell wall formation. Catalyzes the transfer of a GlcNAc subunit on undecaprenyl-pyrophosphoryl-MurNAc-pentapeptide (lipid intermediate I) to form undecaprenyl-pyrophosphoryl-MurNAc-(pentapeptide)GlcNAc (lipid intermediate II). The sequence is that of UDP-N-acetylglucosamine--N-acetylmuramyl-(pentapeptide) pyrophosphoryl-undecaprenol N-acetylglucosamine transferase from Paraburkholderia phytofirmans (strain DSM 17436 / LMG 22146 / PsJN) (Burkholderia phytofirmans).